The following is a 179-amino-acid chain: Protein GrpE (179 aa).

The span at 1–14 (MSKKDKKEEIKEEV) shows a compositional bias: basic and acidic residues. A disordered region spans residues 1 to 40 (MSKKDKKEEIKEEVEATEPTTEESVEEVAEETSENKELQE). Residues 15 to 32 (EATEPTTEESVEEVAEET) show a composition bias toward acidic residues.

This sequence belongs to the GrpE family. As to quaternary structure, homodimer.

It localises to the cytoplasm. Participates actively in the response to hyperosmotic and heat shock by preventing the aggregation of stress-denatured proteins, in association with DnaK and GrpE. It is the nucleotide exchange factor for DnaK and may function as a thermosensor. Unfolded proteins bind initially to DnaJ; upon interaction with the DnaJ-bound protein, DnaK hydrolyzes its bound ATP, resulting in the formation of a stable complex. GrpE releases ADP from DnaK; ATP binding to DnaK triggers the release of the substrate protein, thus completing the reaction cycle. Several rounds of ATP-dependent interactions between DnaJ, DnaK and GrpE are required for fully efficient folding. The polypeptide is Protein GrpE (Streptococcus mutans serotype c (strain ATCC 700610 / UA159)).